We begin with the raw amino-acid sequence, 56 residues long: Small ribosomal subunit protein uS14 (56 aa).

Zn(2+) is bound by residues cysteine 21, cysteine 24, cysteine 39, and cysteine 42.

Belongs to the universal ribosomal protein uS14 family. In terms of assembly, component of the 40S small ribosomal subunit. Zn(2+) is required as a cofactor.

Its subcellular location is the cytoplasm. It localises to the cytosol. The protein localises to the rough endoplasmic reticulum. The chain is Small ribosomal subunit protein uS14 (RpS29) from Scarabaeus laticollis (Scarab dung beetle).